A 161-amino-acid polypeptide reads, in one-letter code: Nucleotide-binding protein RC1_3464 (161 aa).

It belongs to the YajQ family.

Its function is as follows. Nucleotide-binding protein. In Rhodospirillum centenum (strain ATCC 51521 / SW), this protein is Nucleotide-binding protein RC1_3464.